A 104-amino-acid polypeptide reads, in one-letter code: Nucleoid-associated protein OB0030 (104 aa).

The disordered stretch occupies residues 1–23; sequence MKGNMNNMMKQMQKMQKKMMQAQ.

The protein belongs to the YbaB/EbfC family. As to quaternary structure, homodimer.

Its subcellular location is the cytoplasm. It localises to the nucleoid. Binds to DNA and alters its conformation. May be involved in regulation of gene expression, nucleoid organization and DNA protection. In Oceanobacillus iheyensis (strain DSM 14371 / CIP 107618 / JCM 11309 / KCTC 3954 / HTE831), this protein is Nucleoid-associated protein OB0030.